A 32-amino-acid polypeptide reads, in one-letter code: FGSFIPCAHKGEPCTICCRPLRCHEEKTPTCV.

4-hydroxyproline occurs at positions 6, 13, 20, and 29. 3 disulfides stabilise this stretch: C7/C18, C14/C23, and C17/C31.

Expressed by the venom duct.

Its subcellular location is the secreted. Intraperitoneal injection into fish (0.5 nmol) provokes vertical suspension and paralysis after 6 minutes. This is Conotoxin pr6b from Conus parius (Cone snail).